The following is a 444-amino-acid chain: MLENFIANQATKEFSVSEISNKIKELLENNFGYIKVKGEISGLKIASSGHAYFNLKENTAILACTCWRPILAKIKFPLNDGIEVVISGKLSSYAGNSRYQLSVDNLQPAGLGAMLQILNDRKARLEKEGLFNKIRIPIPFLPDKIGVITSITGAVIKDIIHRIRERFPTRIIIWPVSVQGENSSNEIAEAIEGFNNLAEVNKPSVIIVARGGGSIEDLWSFNDEILVRAAYNSKIPIISAVGHEVDYTLIDLAADKRAPTPTAAAEFAVPVRSILNNTLHSYEKILLNNTSRLIKYHEHNIINYDKIHRYLSHYMDNRQQLLDETGFNLLDALLCFIELQETKIKSFSKERVNPAKILNYKTLELTHQTAYLSKSANNTLKNFEYKLELNSTLLASLDYNNVLKRGFAIVKGETGNFLSSKIAAANEKIFNIKFSDGEIKVVRN.

This sequence belongs to the XseA family. Heterooligomer composed of large and small subunits.

It is found in the cytoplasm. It carries out the reaction Exonucleolytic cleavage in either 5'- to 3'- or 3'- to 5'-direction to yield nucleoside 5'-phosphates.. Its function is as follows. Bidirectionally degrades single-stranded DNA into large acid-insoluble oligonucleotides, which are then degraded further into small acid-soluble oligonucleotides. The polypeptide is Exodeoxyribonuclease 7 large subunit (Rickettsia akari (strain Hartford)).